The chain runs to 277 residues: Inositol monophosphatase 1 (277 aa).

Residues Glu-70, Asp-90, Ile-92, and Asp-93 each contribute to the Mg(2+) site. Glu-70 serves as a coordination point for substrate. A substrate-binding site is contributed by 92 to 95 (IDGT). Phosphothreonine is present on Thr-168. Residues 194 to 196 (GTA), Glu-213, and Asp-220 each bind substrate. Residue Asp-220 participates in Mg(2+) binding.

It belongs to the inositol monophosphatase superfamily. As to quaternary structure, homodimer. It depends on Mg(2+) as a cofactor.

Its subcellular location is the cytoplasm. It catalyses the reaction a myo-inositol phosphate + H2O = myo-inositol + phosphate. It carries out the reaction 1D-myo-inositol 1-phosphate + H2O = myo-inositol + phosphate. The enzyme catalyses 1D-myo-inositol 2-phosphate + H2O = myo-inositol + phosphate. The catalysed reaction is 1D-myo-inositol 3-phosphate + H2O = myo-inositol + phosphate. It catalyses the reaction 1D-myo-inositol 4-phosphate + H2O = myo-inositol + phosphate. It carries out the reaction 1D-myo-inositol 5-phosphate + H2O = myo-inositol + phosphate. The enzyme catalyses 1D-myo-inositol 6-phosphate + H2O = myo-inositol + phosphate. The catalysed reaction is scyllo-inositol 1-phosphate + H2O = scyllo-inositol + phosphate. It catalyses the reaction alpha-D-galactose 1-phosphate + H2O = D-galactose + phosphate. It carries out the reaction alpha-D-glucose 1-phosphate + H2O = D-glucose + phosphate. The enzyme catalyses D-glucose 6-phosphate + H2O = D-glucose + phosphate. The catalysed reaction is beta-D-fructose 1-phosphate + H2O = D-fructose + phosphate. It catalyses the reaction glycerol 2-phosphate + H2O = glycerol + phosphate. It carries out the reaction adenosine 2'-phosphate + H2O = adenosine + phosphate. The protein operates within polyol metabolism; myo-inositol biosynthesis; myo-inositol from D-glucose 6-phosphate: step 2/2. Activity with myo-inositol monophosphates and D-galactose 1-phosphate is inhibited by Li(+), Ca(2+) and Mn(2+), but also by Mg(2+) at concentrations above 3 mM. In terms of biological role, phosphatase involved in the dephosphorylation of myo-inositol monophosphates to generate myo-inositol. Is also able to dephosphorylate scyllo-inositol-phosphate, myo-inositol 1,4-diphosphate, scyllo-inositol-1,3-diphosphate and scyllo-inositol-1,4-diphosphate. Also dephosphorylates in vitro other sugar-phosphates including D-galactose-1-phosphate, glucose-1-phosphate, glucose-6-phosphate, fructose-1-phosphate, beta-glycerophosphate and 2'-AMP. Responsible for the provision of inositol required for synthesis of phosphatidylinositols and polyphosphoinositides, and involved in maintaining normal brain function. Has been implicated as the pharmacological target for lithium (Li(+)) action in brain, which is used to treat bipolar affective disorder. Is equally active with 1D-myo-inositol 1-phosphate, 1D-myo-inositol 3-phosphate and D-galactose 1-phosphate. In Homo sapiens (Human), this protein is Inositol monophosphatase 1.